A 377-amino-acid chain; its full sequence is Early estrogen-induced gene 1 protein (377 aa).

A C2 NT-type domain is found at 2–145 (AFLTKKKKFK…ILKVNIGMSL (144 aa)). Polar residues-rich tracts occupy residues 160–173 (KTVS…SLQM), 188–198 (VRQNRSRQAML), and 222–234 (SRNS…QSKI). The tract at residues 160-313 (KTVSPPGQDS…SVESQPTWVD (154 aa)) is disordered. Low complexity predominate over residues 256-269 (TSTSSSVSGGLSLT). Over residues 274 to 285 (EPERDVKPEKPP) the composition is skewed to basic and acidic residues.

The protein belongs to the EEIG family.

It localises to the nucleus. Its subcellular location is the cytoplasm. Its function is as follows. May be involved in osteoclast differentiation. This Xenopus laevis (African clawed frog) protein is Early estrogen-induced gene 1 protein (eeig1).